A 304-amino-acid polypeptide reads, in one-letter code: Quorum-quenching protein AidA (304 aa).

Belongs to the AB hydrolase superfamily.

In terms of biological role, involved in quorum quenching (QQ). Inhibits motility and biofilm formation. Could contribute in bacterial competition, as it is capable of hydrolyzing the signaling molecules that mediate interspecies communication. This chain is Quorum-quenching protein AidA, found in Acinetobacter baumannii (strain MDR-ZJ06).